The primary structure comprises 186 residues: Large ribosomal subunit protein eL18 (186 aa).

This sequence belongs to the eukaryotic ribosomal protein eL18 family. As to quaternary structure, component of the large ribosomal subunit. Mature ribosomes consist of a small (40S) and a large (60S) subunit. The 40S subunit contains about 32 different proteins and 1 molecule of RNA (18S). The 60S subunit contains 45 different proteins and 3 molecules of RNA (25S, 5.8S and 5S).

The protein resides in the cytoplasm. Functionally, component of the ribosome, a large ribonucleoprotein complex responsible for the synthesis of proteins in the cell. The small ribosomal subunit (SSU) binds messenger RNAs (mRNAs) and translates the encoded message by selecting cognate aminoacyl-transfer RNA (tRNA) molecules. The large subunit (LSU) contains the ribosomal catalytic site termed the peptidyl transferase center (PTC), which catalyzes the formation of peptide bonds, thereby polymerizing the amino acids delivered by tRNAs into a polypeptide chain. The nascent polypeptides leave the ribosome through a tunnel in the LSU and interact with protein factors that function in enzymatic processing, targeting, and the membrane insertion of nascent chains at the exit of the ribosomal tunnel. This Candida albicans (strain SC5314 / ATCC MYA-2876) (Yeast) protein is Large ribosomal subunit protein eL18.